The following is a 115-amino-acid chain: Large ribosomal subunit protein bL19 (115 aa).

It belongs to the bacterial ribosomal protein bL19 family.

Functionally, this protein is located at the 30S-50S ribosomal subunit interface and may play a role in the structure and function of the aminoacyl-tRNA binding site. The protein is Large ribosomal subunit protein bL19 of Francisella tularensis subsp. tularensis (strain FSC 198).